A 351-amino-acid chain; its full sequence is MSITIKLGQLAEFLGATLRGDKDIEITGLATLQEAGPGQVSFLANPKYRKLLVDTQATAVLLKPADADGYAGNALVVPDTYLAYARISHFFDPKPKSSAGVHPTAVIAADALIDPAASIGAFAVIESGVRIAAGVTIGAHCFIGARCEIGEGGWLAPRVTLYHDVRIGKRVVIQSGAVLGGEGFGFAQDKGIYHKVAQIGGVTLGDDVEVGVNTAIDRGALADTRIGNGVKLDNQIQIAHNVQIGDHTAMAACVGISGSTKIGKHCMLAGGVGLVGHIEICDGVFITGMTMVTHSITEPGSYSSGTAMQPAAEWRKSAARLRKIDDMARRLQKLEKAIETVTCADNRSSDG.

The Proton acceptor role is filled by His-240.

Belongs to the transferase hexapeptide repeat family. LpxD subfamily. In terms of assembly, homotrimer.

It carries out the reaction a UDP-3-O-[(3R)-3-hydroxyacyl]-alpha-D-glucosamine + a (3R)-hydroxyacyl-[ACP] = a UDP-2-N,3-O-bis[(3R)-3-hydroxyacyl]-alpha-D-glucosamine + holo-[ACP] + H(+). It participates in bacterial outer membrane biogenesis; LPS lipid A biosynthesis. Functionally, catalyzes the N-acylation of UDP-3-O-acylglucosamine using 3-hydroxyacyl-ACP as the acyl donor. Is involved in the biosynthesis of lipid A, a phosphorylated glycolipid that anchors the lipopolysaccharide to the outer membrane of the cell. The chain is UDP-3-O-acylglucosamine N-acyltransferase from Pseudomonas syringae pv. syringae (strain B728a).